We begin with the raw amino-acid sequence, 452 residues long: Glutamyl-tRNA(Gln) amidotransferase subunit A (452 aa).

Catalysis depends on charge relay system residues Lys-56 and Ser-131. Ser-155 (acyl-ester intermediate) is an active-site residue.

Belongs to the amidase family. GatA subfamily. In terms of assembly, heterotrimer of A, B and C subunits.

It carries out the reaction L-glutamyl-tRNA(Gln) + L-glutamine + ATP + H2O = L-glutaminyl-tRNA(Gln) + L-glutamate + ADP + phosphate + H(+). Allows the formation of correctly charged Gln-tRNA(Gln) through the transamidation of misacylated Glu-tRNA(Gln) in organisms which lack glutaminyl-tRNA synthetase. The reaction takes place in the presence of glutamine and ATP through an activated gamma-phospho-Glu-tRNA(Gln). The protein is Glutamyl-tRNA(Gln) amidotransferase subunit A of Campylobacter concisus (strain 13826).